We begin with the raw amino-acid sequence, 122 residues long: Large ribosomal subunit protein uL14 (122 aa).

Belongs to the universal ribosomal protein uL14 family. In terms of assembly, part of the 50S ribosomal subunit. Forms a cluster with proteins L3 and L19. In the 70S ribosome, L14 and L19 interact and together make contacts with the 16S rRNA in bridges B5 and B8.

Binds to 23S rRNA. Forms part of two intersubunit bridges in the 70S ribosome. The chain is Large ribosomal subunit protein uL14 from Micrococcus luteus (Micrococcus lysodeikticus).